Consider the following 171-residue polypeptide: Shikimate kinase (171 aa).

13 to 18 lines the ATP pocket; sequence GVGKST. Mg(2+) is bound at residue Ser-17. Substrate is bound by residues Asp-35, Arg-59, and Gly-81. ATP is bound at residue Arg-118. Arg-136 lines the substrate pocket. Arg-153 serves as a coordination point for ATP.

It belongs to the shikimate kinase family. In terms of assembly, monomer. Mg(2+) is required as a cofactor.

Its subcellular location is the cytoplasm. It catalyses the reaction shikimate + ATP = 3-phosphoshikimate + ADP + H(+). It participates in metabolic intermediate biosynthesis; chorismate biosynthesis; chorismate from D-erythrose 4-phosphate and phosphoenolpyruvate: step 5/7. Its function is as follows. Catalyzes the specific phosphorylation of the 3-hydroxyl group of shikimic acid using ATP as a cosubstrate. The sequence is that of Shikimate kinase from Streptomyces avermitilis (strain ATCC 31267 / DSM 46492 / JCM 5070 / NBRC 14893 / NCIMB 12804 / NRRL 8165 / MA-4680).